We begin with the raw amino-acid sequence, 397 residues long: Phosphoglycerate kinase (397 aa).

Substrate-binding positions include 21 to 23 (DVN), R36, 59 to 62 (HFGR), R119, and R152. Residues K202, E324, and 354–357 (GGDT) contribute to the ATP site.

Belongs to the phosphoglycerate kinase family. In terms of assembly, monomer.

Its subcellular location is the cytoplasm. The catalysed reaction is (2R)-3-phosphoglycerate + ATP = (2R)-3-phospho-glyceroyl phosphate + ADP. Its pathway is carbohydrate degradation; glycolysis; pyruvate from D-glyceraldehyde 3-phosphate: step 2/5. This is Phosphoglycerate kinase from Cereibacter sphaeroides (strain ATCC 17025 / ATH 2.4.3) (Rhodobacter sphaeroides).